Reading from the N-terminus, the 161-residue chain is RuBisCO chaperone RbcX (161 aa).

2 disordered regions span residues 1 to 20 and 130 to 161; these read MQFM…KPME and LGAE…SHAD. Positions 147-161 are enriched in polar residues; that stretch reads DSATPDDASNASHAD.

It belongs to the RbcX family. In terms of assembly, homodimer. Interacts with the exposed C-terminal peptide of endogenous RbcL ('Lys-460-Asp-470') via its central cleft, as well as C-terminal peptides from other cyanobacterial RbcL. Contacts a second RbcL monomer via its peripheral polar surface.

Its subcellular location is the carboxysome. It is found in the cytoplasm. An RbcL-specific chaperone. The central cleft of the RbcX homodimer (RbcX2) binds the C-terminus of an RbcL monomer, stabilizing the C-terminus and probably preventing its reassociation with chaperonin GroEL-ES. At the same time the peripheral region of RbcX2 binds a second RbcL monomer, bridging the RbcL homodimers in the correct orientation. The RbcX2(2)-bound RbcL dimers then assemble into the RbcL8 core (RbcL8-(RbcX2)8). RbcS binding triggers the release of RbcX2. In Synechococcus sp. (strain ATCC 27144 / PCC 6301 / SAUG 1402/1) (Anacystis nidulans), this protein is RuBisCO chaperone RbcX.